The primary structure comprises 232 residues: Fibrillarin-like rRNA/tRNA 2'-O-methyltransferase (232 aa).

Residues 89-90, 108-109, 133-134, and 153-156 each bind S-adenosyl-L-methionine; these read TT, EF, DA, and DIAQ.

Belongs to the methyltransferase superfamily. Fibrillarin family. In terms of assembly, interacts with nop5. Component of box C/D small ribonucleoprotein (sRNP) particles that contain rpl7ae, FlpA and nop5, plus a guide RNA. These sRNP particles form homodimers, giving rise to an asymmetric holoenzyme.

Functionally, involved in pre-rRNA and tRNA processing. Utilizes the methyl donor S-adenosyl-L-methionine to catalyze the site-specific 2'-hydroxyl methylation of ribose moieties in rRNA and tRNA. Site specificity is provided by a guide RNA that base pairs with the substrate. Methylation occurs at a characteristic distance from the sequence involved in base pairing with the guide RNA. The polypeptide is Fibrillarin-like rRNA/tRNA 2'-O-methyltransferase (Saccharolobus solfataricus (strain ATCC 35092 / DSM 1617 / JCM 11322 / P2) (Sulfolobus solfataricus)).